Here is a 78-residue protein sequence, read N- to C-terminus: Small ribosomal subunit protein bS16c (78 aa).

This sequence belongs to the bacterial ribosomal protein bS16 family.

It is found in the plastid. The protein resides in the chloroplast. This Chara vulgaris (Common stonewort) protein is Small ribosomal subunit protein bS16c.